The following is a 46-amino-acid chain: MKVLNSLRTAKERHPDCQIVKRKGRLYVICKSNPRFKAVQGRKKKR.

It belongs to the bacterial ribosomal protein bL36 family.

This chain is Large ribosomal subunit protein bL36, found in Escherichia coli O7:K1 (strain IAI39 / ExPEC).